A 381-amino-acid polypeptide reads, in one-letter code: Glucose-1-phosphate adenylyltransferase (381 aa).

Residues Tyr-100, Gly-165, 180 to 181 (EK), and Ser-191 contribute to the alpha-D-glucose 1-phosphate site.

It belongs to the bacterial/plant glucose-1-phosphate adenylyltransferase family. As to quaternary structure, homotetramer.

It carries out the reaction alpha-D-glucose 1-phosphate + ATP + H(+) = ADP-alpha-D-glucose + diphosphate. Its pathway is glycan biosynthesis; glycogen biosynthesis. Its function is as follows. Involved in the biosynthesis of ADP-glucose, a building block required for the elongation reactions to produce glycogen. Catalyzes the reaction between ATP and alpha-D-glucose 1-phosphate (G1P) to produce pyrophosphate and ADP-Glc. This Mycoplasma mobile (strain ATCC 43663 / 163K / NCTC 11711) (Mesomycoplasma mobile) protein is Glucose-1-phosphate adenylyltransferase.